The sequence spans 463 residues: L-seryl-tRNA(Sec) selenium transferase (463 aa).

Position 295 is an N6-(pyridoxal phosphate)lysine (lysine 295).

The protein belongs to the SelA family. Homodecamer; pentamer of dimers. Binds only one seryl-tRNA(Sec) per dimer. Pyridoxal 5'-phosphate serves as cofactor.

The protein localises to the cytoplasm. It carries out the reaction L-seryl-tRNA(Sec) + selenophosphate + H(+) = L-selenocysteinyl-tRNA(Sec) + phosphate. It functions in the pathway aminoacyl-tRNA biosynthesis; selenocysteinyl-tRNA(Sec) biosynthesis; selenocysteinyl-tRNA(Sec) from L-seryl-tRNA(Sec) (bacterial route): step 1/1. Functionally, converts seryl-tRNA(Sec) to selenocysteinyl-tRNA(Sec) required for selenoprotein biosynthesis. The sequence is that of L-seryl-tRNA(Sec) selenium transferase from Shigella sonnei (strain Ss046).